Here is a 524-residue protein sequence, read N- to C-terminus: Acetyl-CoA decarbonylase/synthase complex subunit beta (524 aa).

4 residues coordinate [Ni-Fe-S] cluster: Cys-212, Cys-215, Cys-301, and Cys-303. The disordered stretch occupies residues 436–466; that stretch reads WVEEEEEEAEEVAEEAAAEAAPAAQPAQAAQ. A compositionally biased stretch (acidic residues) spans 437-452; that stretch reads VEEEEEEAEEVAEEAA. The segment covering 453–466 has biased composition (low complexity); the sequence is AEAAPAAQPAQAAQ.

The protein belongs to the CdhC family. As to quaternary structure, monomer. The ACDS complex is made up of alpha, epsilon, beta, gamma and delta chains with a probable stoichiometry of (alpha(2)epsilon(2))(4)-beta(8)-(gamma(1)delta(1))(8). The cofactor is [Ni-Fe-S] cluster.

The enzyme catalyses Co(I)-[corrinoid Fe-S protein] + acetyl-CoA + H(+) = methyl-Co(III)-[corrinoid Fe-S protein] + CO + CoA. Its function is as follows. Part of a complex that catalyzes the reversible cleavage of acetyl-CoA, allowing autotrophic growth from CO(2). The alpha-epsilon complex generates CO from CO(2), while the beta subunit (this protein) combines the CO with CoA and a methyl group to form acetyl-CoA. The methyl group, which is incorporated into acetyl-CoA, is transferred to the beta subunit by a corrinoid iron-sulfur protein (the gamma-delta complex). This chain is Acetyl-CoA decarbonylase/synthase complex subunit beta, found in Archaeoglobus fulgidus (strain ATCC 49558 / DSM 4304 / JCM 9628 / NBRC 100126 / VC-16).